We begin with the raw amino-acid sequence, 331 residues long: Heat-inducible transcription repressor HrcA (331 aa).

It belongs to the HrcA family.

Its function is as follows. Negative regulator of class I heat shock genes (grpE-dnaK-dnaJ and groELS operons). Prevents heat-shock induction of these operons. This is Heat-inducible transcription repressor HrcA from Synechococcus sp. (strain WH7803).